Here is a 316-residue protein sequence, read N- to C-terminus: HPr kinase/phosphorylase (316 aa).

Residues His-143 and Lys-164 contribute to the active site. Residue 158-165 participates in ATP binding; the sequence is GEAGSGKS. A Mg(2+)-binding site is contributed by Ser-165. Catalysis depends on Asp-182, which acts as the Proton acceptor; for phosphorylation activity. Proton donor; for dephosphorylation activity. The interval 206–215 is important for the catalytic mechanism of both phosphorylation and dephosphorylation; that stretch reads LEVRGLGVLN. Glu-207 contributes to the Mg(2+) binding site. Arg-251 is a catalytic residue. Residues 272-277 form an important for the catalytic mechanism of dephosphorylation region; the sequence is PVMPGR.

It belongs to the HPrK/P family. In terms of assembly, homohexamer. It depends on Mg(2+) as a cofactor.

It catalyses the reaction [HPr protein]-L-serine + ATP = [HPr protein]-O-phospho-L-serine + ADP + H(+). The enzyme catalyses [HPr protein]-O-phospho-L-serine + phosphate + H(+) = [HPr protein]-L-serine + diphosphate. Catalyzes the ATP- as well as the pyrophosphate-dependent phosphorylation of a specific serine residue in HPr, a phosphocarrier protein of the phosphoenolpyruvate-dependent sugar phosphotransferase system (PTS). HprK/P also catalyzes the pyrophosphate-producing, inorganic phosphate-dependent dephosphorylation (phosphorolysis) of seryl-phosphorylated HPr (P-Ser-HPr). This is HPr kinase/phosphorylase from Xanthomonas euvesicatoria pv. vesicatoria (strain 85-10) (Xanthomonas campestris pv. vesicatoria).